Reading from the N-terminus, the 404-residue chain is Cysteine desulfurase IscS (404 aa).

Pyridoxal 5'-phosphate contacts are provided by residues 75-76 (AT), Asn155, Gln183, and 203-205 (SAH). An N6-(pyridoxal phosphate)lysine modification is found at Lys206. Thr243 is a pyridoxal 5'-phosphate binding site. Cys328 acts as the Cysteine persulfide intermediate in catalysis. Residue Cys328 coordinates [2Fe-2S] cluster.

Belongs to the class-V pyridoxal-phosphate-dependent aminotransferase family. NifS/IscS subfamily. In terms of assembly, homodimer. Forms a heterotetramer with IscU, interacts with other sulfur acceptors. The cofactor is pyridoxal 5'-phosphate.

Its subcellular location is the cytoplasm. It carries out the reaction (sulfur carrier)-H + L-cysteine = (sulfur carrier)-SH + L-alanine. The protein operates within cofactor biosynthesis; iron-sulfur cluster biosynthesis. Its function is as follows. Master enzyme that delivers sulfur to a number of partners involved in Fe-S cluster assembly, tRNA modification or cofactor biosynthesis. Catalyzes the removal of elemental sulfur atoms from cysteine to produce alanine. Functions as a sulfur delivery protein for Fe-S cluster synthesis onto IscU, an Fe-S scaffold assembly protein, as well as other S acceptor proteins. The sequence is that of Cysteine desulfurase IscS from Neisseria meningitidis serogroup C / serotype 2a (strain ATCC 700532 / DSM 15464 / FAM18).